The sequence spans 469 residues: UDP-N-acetylmuramate--L-alanine ligase (469 aa).

118 to 124 (GTHGKTT) contacts ATP.

The protein belongs to the MurCDEF family.

It localises to the cytoplasm. The enzyme catalyses UDP-N-acetyl-alpha-D-muramate + L-alanine + ATP = UDP-N-acetyl-alpha-D-muramoyl-L-alanine + ADP + phosphate + H(+). It participates in cell wall biogenesis; peptidoglycan biosynthesis. Cell wall formation. The protein is UDP-N-acetylmuramate--L-alanine ligase of Ruegeria sp. (strain TM1040) (Silicibacter sp.).